Consider the following 66-residue polypeptide: Large ribosomal subunit protein bL32 (66 aa).

This sequence belongs to the bacterial ribosomal protein bL32 family.

The sequence is that of Large ribosomal subunit protein bL32 from Rickettsia akari (strain Hartford).